Here is a 591-residue protein sequence, read N- to C-terminus: Aspartate--tRNA(Asp/Asn) ligase (591 aa).

Residue glutamate 174 participates in L-aspartate binding. An aspartate region spans residues 198–201 (QLFK). Arginine 220 serves as a coordination point for L-aspartate. ATP is bound by residues 220 to 222 (RDE) and glutamine 229. An L-aspartate-binding site is contributed by histidine 450. Glutamate 483 lines the ATP pocket. Arginine 490 provides a ligand contact to L-aspartate. 535-538 (GLDR) is a binding site for ATP.

It belongs to the class-II aminoacyl-tRNA synthetase family. Type 1 subfamily. In terms of assembly, homodimer.

It is found in the cytoplasm. It catalyses the reaction tRNA(Asx) + L-aspartate + ATP = L-aspartyl-tRNA(Asx) + AMP + diphosphate. Its function is as follows. Aspartyl-tRNA synthetase with relaxed tRNA specificity since it is able to aspartylate not only its cognate tRNA(Asp) but also tRNA(Asn). Reaction proceeds in two steps: L-aspartate is first activated by ATP to form Asp-AMP and then transferred to the acceptor end of tRNA(Asp/Asn). The polypeptide is Aspartate--tRNA(Asp/Asn) ligase (Pseudomonas aeruginosa (strain LESB58)).